A 959-amino-acid polypeptide reads, in one-letter code: Translation initiation factor IF-2 (959 aa).

Over residues M1–T10 the composition is skewed to basic and acidic residues. The segment at M1–I374 is disordered. Residues E27–H37 are compositionally biased toward polar residues. Composition is skewed to low complexity over residues A63–P118 and Q128–P138. Basic and acidic residues-rich tracts occupy residues S154–K225 and A232–R241. A compositionally biased stretch (low complexity) spans G246–A284. A compositionally biased stretch (basic and acidic residues) spans P318–R333. Positions S457–K626 constitute a tr-type G domain. Residues G466–T473 form a G1 region. G466 to T473 provides a ligand contact to GTP. Positions G491 to H495 are G2. The tract at residues D512–G515 is G3. GTP-binding positions include D512 to H516 and N566 to D569. The segment at N566 to D569 is G4. Residues S602 to K604 are G5.

It belongs to the TRAFAC class translation factor GTPase superfamily. Classic translation factor GTPase family. IF-2 subfamily.

It localises to the cytoplasm. One of the essential components for the initiation of protein synthesis. Protects formylmethionyl-tRNA from spontaneous hydrolysis and promotes its binding to the 30S ribosomal subunits. Also involved in the hydrolysis of GTP during the formation of the 70S ribosomal complex. In Brucella melitensis biotype 1 (strain ATCC 23456 / CCUG 17765 / NCTC 10094 / 16M), this protein is Translation initiation factor IF-2.